Reading from the N-terminus, the 197-residue chain is MSVCLAITKGIAVSSIGLYSGLLASASLITSTTPLEVLTGSLTPTLTTLKNAATALGAFASTFFCVSFFGAPPSLRHPYLLYGMLVAPLSSFVLGCASNYQSRKYSKVSKESSLFPEDSKLAASELSDSIIDLGEDNHASENTPRDGKPAATTVSKPAEALHTGPPIHTKNLIAATAIAIVGFVQAVIGVYGEGQFI.

3 helical membrane-spanning segments follow: residues 10–30 (GIAV…SLIT), 52–72 (AATA…FGAP), and 78–98 (PYLL…GCAS). 2 positions are modified to phosphoserine: S127 and S129. Positions 135 to 148 (EDNHASENTPRDGK) are enriched in basic and acidic residues. The interval 135-154 (EDNHASENTPRDGKPAATTV) is disordered. A helical transmembrane segment spans residues 172-192 (LIAATAIAIVGFVQAVIGVYG).

Belongs to the ATG33 family.

It localises to the mitochondrion membrane. Functionally, involved in the selective degradation of mitochondria via autophagy during starvation and at post-log phase. The polypeptide is Autophagy-related protein 33 (ATG33) (Saccharomyces cerevisiae (strain ATCC 204508 / S288c) (Baker's yeast)).